The following is a 272-amino-acid chain: Type III pantothenate kinase (272 aa).

Residue 6–13 (DVRNTHTV) participates in ATP binding. 109 to 112 (GADR) contributes to the substrate binding site. The active-site Proton acceptor is aspartate 111. Aspartate 131 lines the K(+) pocket. Serine 134 is an ATP binding site. Threonine 186 contributes to the substrate binding site.

The protein belongs to the type III pantothenate kinase family. Homodimer. NH4(+) serves as cofactor. K(+) is required as a cofactor.

The protein localises to the cytoplasm. It catalyses the reaction (R)-pantothenate + ATP = (R)-4'-phosphopantothenate + ADP + H(+). It participates in cofactor biosynthesis; coenzyme A biosynthesis; CoA from (R)-pantothenate: step 1/5. Its function is as follows. Catalyzes the phosphorylation of pantothenate (Pan), the first step in CoA biosynthesis. The chain is Type III pantothenate kinase from Mycobacterium ulcerans (strain Agy99).